Reading from the N-terminus, the 122-residue chain is Large ribosomal subunit protein bL19 (122 aa).

It belongs to the bacterial ribosomal protein bL19 family.

Its function is as follows. This protein is located at the 30S-50S ribosomal subunit interface and may play a role in the structure and function of the aminoacyl-tRNA binding site. This chain is Large ribosomal subunit protein bL19, found in Mycoplasmoides gallisepticum (strain R(low / passage 15 / clone 2)) (Mycoplasma gallisepticum).